Reading from the N-terminus, the 200-residue chain is Proteasome subunit beta 2 (200 aa).

Positions 1–10 (MSDQLELMTG) are cleaved as a propeptide — removed in mature form; by autocatalysis. Thr-11 (nucleophile) is an active-site residue.

Belongs to the peptidase T1B family. The 20S proteasome core is composed of 14 alpha and 14 beta subunits that assemble into four stacked heptameric rings, resulting in a barrel-shaped structure. The two inner rings, each composed of seven catalytic beta subunits, are sandwiched by two outer rings, each composed of seven alpha subunits. The catalytic chamber with the active sites is on the inside of the barrel. Has a gated structure, the ends of the cylinder being occluded by the N-termini of the alpha-subunits. Is capped at one or both ends by the proteasome regulatory ATPase, PAN.

It localises to the cytoplasm. It carries out the reaction Cleavage of peptide bonds with very broad specificity.. With respect to regulation, the formation of the proteasomal ATPase PAN-20S proteasome complex, via the docking of the C-termini of PAN into the intersubunit pockets in the alpha-rings, triggers opening of the gate for substrate entry. Interconversion between the open-gate and close-gate conformations leads to a dynamic regulation of the 20S proteasome proteolysis activity. Component of the proteasome core, a large protease complex with broad specificity involved in protein degradation. The sequence is that of Proteasome subunit beta 2 from Caldivirga maquilingensis (strain ATCC 700844 / DSM 13496 / JCM 10307 / IC-167).